The primary structure comprises 51 residues: Sperm protamine P1 (51 aa).

This sequence belongs to the protamine P1 family. In terms of tissue distribution, testis.

The protein localises to the nucleus. It localises to the chromosome. Functionally, protamines substitute for histones in the chromatin of sperm during the haploid phase of spermatogenesis. They compact sperm DNA into a highly condensed, stable and inactive complex. This Trachypithecus johnii (Nilgiri langur) protein is Sperm protamine P1 (PRM1).